The chain runs to 266 residues: MRLIPLVTAEQVGKWAARHIVNRINAFKPTADRPFVLGLPTGGTPLTAYKALVEMHKAGQVSFKHVVTFNMDEYVGLPKEHPESYHSFMHRNFFDHVDIPAENINLLNGNAPDIDAECRRYEEKIRSYGKIHLFMGGVGNDGHIAFNEPASSLASRTRIKTLTHETRVANSRFFDGDVDLVPKYALTVGVGTLLDAEEVMILVLGHQKALALQAAVEGNVNHMWTITCLQLHPKAVIVCDEPSTMELKVKTLKYFNELEAENIKGL.

Catalysis depends on D72, which acts as the Proton acceptor; for enolization step. The For ring-opening step role is filled by D141. H143 acts as the Proton acceptor; for ring-opening step in catalysis. E148 (for ring-opening step) is an active-site residue.

This sequence belongs to the glucosamine/galactosamine-6-phosphate isomerase family. NagB subfamily. As to quaternary structure, homohexamer.

The enzyme catalyses alpha-D-glucosamine 6-phosphate + H2O = beta-D-fructose 6-phosphate + NH4(+). The protein operates within amino-sugar metabolism; N-acetylneuraminate degradation; D-fructose 6-phosphate from N-acetylneuraminate: step 5/5. Allosterically activated by N-acetylglucosamine 6-phosphate (GlcNAc6P). In terms of biological role, catalyzes the reversible isomerization-deamination of glucosamine 6-phosphate (GlcN6P) to form fructose 6-phosphate (Fru6P) and ammonium ion. The chain is Glucosamine-6-phosphate deaminase from Klebsiella pneumoniae subsp. pneumoniae (strain ATCC 700721 / MGH 78578).